The chain runs to 272 residues: SWIRM domain-containing protein laf2 (272 aa).

Residues 86–148 are disordered; sequence HVGRWANRHS…RRRKSARGNG (63 aa). 2 stretches are compositionally biased toward low complexity: residues 95 to 120 and 127 to 136; these read SNVS…SYSG and RSISSSPSTI. 2 positions are modified to phosphoserine: Ser-130 and Ser-132. The residue at position 135 (Thr-135) is a Phosphothreonine. In terms of domain architecture, SWIRM spans 182 to 272; the sequence is LKAEWKGPPL…AFHEVGFFDD (91 aa).

In terms of assembly, component of the RPD3C(L) complex.

Its subcellular location is the nucleus. Its function is as follows. Component of the RPD3C(L) histone deacetylase complex (HDAC) responsible for the deacetylation of lysine residues on the N-terminal part of the core histones (H2A, H2B, H3 and H4). Histone deacetylation gives a tag for epigenetic repression and plays an important role in transcriptional regulation, cell cycle progression and developmental events. In Schizosaccharomyces pombe (strain 972 / ATCC 24843) (Fission yeast), this protein is SWIRM domain-containing protein laf2 (laf2).